The sequence spans 377 residues: Erythronate-4-phosphate dehydrogenase (377 aa).

Residues S45 and T67 each contribute to the substrate site. NAD(+) is bound by residues 127 to 128 (QV), D147, and T176. The active site involves R209. D233 is an NAD(+) binding site. E238 is an active-site residue. The Proton donor role is filled by H255. NAD(+) is bound at residue G258. Y259 is a binding site for substrate.

It belongs to the D-isomer specific 2-hydroxyacid dehydrogenase family. PdxB subfamily. As to quaternary structure, homodimer.

It localises to the cytoplasm. It catalyses the reaction 4-phospho-D-erythronate + NAD(+) = (R)-3-hydroxy-2-oxo-4-phosphooxybutanoate + NADH + H(+). It participates in cofactor biosynthesis; pyridoxine 5'-phosphate biosynthesis; pyridoxine 5'-phosphate from D-erythrose 4-phosphate: step 2/5. Catalyzes the oxidation of erythronate-4-phosphate to 3-hydroxy-2-oxo-4-phosphonooxybutanoate. This is Erythronate-4-phosphate dehydrogenase from Vibrio vulnificus (strain YJ016).